A 714-amino-acid chain; its full sequence is Hormonally up-regulated neu tumor-associated kinase (714 aa).

The span at M1–A15 shows a compositional bias: low complexity. The interval M1–A26 is disordered. The Protein kinase domain maps to L62–L320. Residues L68–V76 and K91 contribute to the ATP site. Catalysis depends on D186, which acts as the Proton acceptor. Basic and acidic residues predominate over residues K437–L461. Disordered stretches follow at residues K437–L471, M518–D552, and A590–R660. A compositionally biased stretch (low complexity) spans L599–L611. Positions A623–G635 are enriched in basic and acidic residues.

Belongs to the protein kinase superfamily. CAMK Ser/Thr protein kinase family. SNF1 subfamily.

The catalysed reaction is L-seryl-[protein] + ATP = O-phospho-L-seryl-[protein] + ADP + H(+). It catalyses the reaction L-threonyl-[protein] + ATP = O-phospho-L-threonyl-[protein] + ADP + H(+). This Pan troglodytes (Chimpanzee) protein is Hormonally up-regulated neu tumor-associated kinase (HUNK).